A 135-amino-acid polypeptide reads, in one-letter code: Large ribosomal subunit protein uL16c (135 aa).

The protein belongs to the universal ribosomal protein uL16 family. Part of the 50S ribosomal subunit.

Its subcellular location is the plastid. It is found in the chloroplast. This Piper cenocladum (Ant piper) protein is Large ribosomal subunit protein uL16c.